The following is a 165-amino-acid chain: Adenine phosphoribosyltransferase (165 aa).

It belongs to the purine/pyrimidine phosphoribosyltransferase family. Homodimer.

The protein localises to the cytoplasm. It catalyses the reaction AMP + diphosphate = 5-phospho-alpha-D-ribose 1-diphosphate + adenine. It functions in the pathway purine metabolism; AMP biosynthesis via salvage pathway; AMP from adenine: step 1/1. In terms of biological role, catalyzes a salvage reaction resulting in the formation of AMP, that is energically less costly than de novo synthesis. The sequence is that of Adenine phosphoribosyltransferase from Bdellovibrio bacteriovorus (strain ATCC 15356 / DSM 50701 / NCIMB 9529 / HD100).